Reading from the N-terminus, the 179-residue chain is IMPACT family member in pol 5'region (179 aa).

It belongs to the IMPACT family.

The protein is IMPACT family member in pol 5'region of Thermus thermophilus.